A 178-amino-acid polypeptide reads, in one-letter code: Sec-independent protein translocase protein TatB (178 aa).

Residues 1–21 (MFDIGWSELVVIAVVALIAIG) form a helical membrane-spanning segment. Residues 77–86 (TSGNLMTKLT) show a composition bias toward polar residues. The tract at residues 77–178 (TSGNLMTKLT…HEAVKDAKAS (102 aa)) is disordered. A compositionally biased stretch (basic and acidic residues) spans 93–102 (PKLEDLDKPA). Residues 155–165 (HATPEPAPATH) show a composition bias toward low complexity. Positions 166-178 (ETPHEAVKDAKAS) are enriched in basic and acidic residues.

The protein belongs to the TatB family. As to quaternary structure, the Tat system comprises two distinct complexes: a TatABC complex, containing multiple copies of TatA, TatB and TatC subunits, and a separate TatA complex, containing only TatA subunits. Substrates initially bind to the TatABC complex, which probably triggers association of the separate TatA complex to form the active translocon.

It is found in the cell inner membrane. Its function is as follows. Part of the twin-arginine translocation (Tat) system that transports large folded proteins containing a characteristic twin-arginine motif in their signal peptide across membranes. Together with TatC, TatB is part of a receptor directly interacting with Tat signal peptides. TatB may form an oligomeric binding site that transiently accommodates folded Tat precursor proteins before their translocation. In Nitrobacter hamburgensis (strain DSM 10229 / NCIMB 13809 / X14), this protein is Sec-independent protein translocase protein TatB.